Consider the following 435-residue polypeptide: GTPase Obg (435 aa).

The Obg domain occupies 6 to 164 (ADFVDRVKIF…RWLELELKIL (159 aa)). The 171-residue stretch at 165–335 (ADVGLVGYPN…LVSKLASIVR (171 aa)) folds into the OBG-type G domain. GTP is bound by residues 171-178 (GYPNVGKS), 196-200 (FTTLI), 217-220 (DIPG), 287-290 (NKID), and 316-318 (SAV). The Mg(2+) site is built by S178 and T198. In terms of domain architecture, OCT spans 357 to 435 (RRLPEKFHLE…IGDFEFEYRE (79 aa)).

It belongs to the TRAFAC class OBG-HflX-like GTPase superfamily. OBG GTPase family. As to quaternary structure, monomer. Mg(2+) is required as a cofactor.

It localises to the cytoplasm. Functionally, an essential GTPase which binds GTP, GDP and possibly (p)ppGpp with moderate affinity, with high nucleotide exchange rates and a fairly low GTP hydrolysis rate. Plays a role in control of the cell cycle, stress response, ribosome biogenesis and in those bacteria that undergo differentiation, in morphogenesis control. This Thermotoga petrophila (strain ATCC BAA-488 / DSM 13995 / JCM 10881 / RKU-1) protein is GTPase Obg.